The chain runs to 337 residues: Undecaprenyl-phosphate 4-deoxy-4-formamido-L-arabinose transferase (337 aa).

2 helical membrane passes run leucine 235 to isoleucine 255 and phenylalanine 270 to leucine 290.

Belongs to the glycosyltransferase 2 family.

Its subcellular location is the cell inner membrane. It carries out the reaction UDP-4-deoxy-4-formamido-beta-L-arabinose + di-trans,octa-cis-undecaprenyl phosphate = 4-deoxy-4-formamido-alpha-L-arabinopyranosyl di-trans,octa-cis-undecaprenyl phosphate + UDP. It functions in the pathway glycolipid biosynthesis; 4-amino-4-deoxy-alpha-L-arabinose undecaprenyl phosphate biosynthesis; 4-amino-4-deoxy-alpha-L-arabinose undecaprenyl phosphate from UDP-4-deoxy-4-formamido-beta-L-arabinose and undecaprenyl phosphate: step 1/2. The protein operates within bacterial outer membrane biogenesis; lipopolysaccharide biosynthesis. Catalyzes the transfer of 4-deoxy-4-formamido-L-arabinose from UDP to undecaprenyl phosphate. The modified arabinose is attached to lipid A and is required for resistance to polymyxin and cationic antimicrobial peptides. The sequence is that of Undecaprenyl-phosphate 4-deoxy-4-formamido-L-arabinose transferase from Pseudomonas savastanoi pv. phaseolicola (strain 1448A / Race 6) (Pseudomonas syringae pv. phaseolicola (strain 1448A / Race 6)).